The chain runs to 128 residues: Large ribosomal subunit protein eL8 (128 aa).

The protein belongs to the eukaryotic ribosomal protein eL8 family. In terms of assembly, part of the 50S ribosomal subunit. Probably part of the RNase P complex.

The protein resides in the cytoplasm. Multifunctional RNA-binding protein that recognizes the K-turn motif in ribosomal RNA, the RNA component of RNase P, box H/ACA, box C/D and box C'/D' sRNAs. The polypeptide is Large ribosomal subunit protein eL8 (Nitrosopumilus maritimus (strain SCM1)).